Reading from the N-terminus, the 425-residue chain is SrfA-induced gene G protein (425 aa).

Asn-25, Asn-28, and Asn-36 each carry an N-linked (GlcNAc...) asparagine glycan. Coiled coils occupy residues 41–91 (RDSE…RIRN), 172–208 (HEKQ…MKRT), and 292–340 (KFGQ…NYNI). The chain crosses the membrane as a helical span at residues 91–113 (NVFKVLITILVGSIIYGTYTNQF). Residues 393-413 (KKPHADSNGHPKPYPHHHLLN) form a disordered region.

It localises to the membrane. The sequence is that of SrfA-induced gene G protein (sigG) from Dictyostelium discoideum (Social amoeba).